The chain runs to 232 residues: 2-C-methyl-D-erythritol 4-phosphate cytidylyltransferase (232 aa).

The protein belongs to the IspD/TarI cytidylyltransferase family. IspD subfamily.

It catalyses the reaction 2-C-methyl-D-erythritol 4-phosphate + CTP + H(+) = 4-CDP-2-C-methyl-D-erythritol + diphosphate. It functions in the pathway isoprenoid biosynthesis; isopentenyl diphosphate biosynthesis via DXP pathway; isopentenyl diphosphate from 1-deoxy-D-xylulose 5-phosphate: step 2/6. In terms of biological role, catalyzes the formation of 4-diphosphocytidyl-2-C-methyl-D-erythritol from CTP and 2-C-methyl-D-erythritol 4-phosphate (MEP). This is 2-C-methyl-D-erythritol 4-phosphate cytidylyltransferase from Bacillus velezensis (strain DSM 23117 / BGSC 10A6 / LMG 26770 / FZB42) (Bacillus amyloliquefaciens subsp. plantarum).